Consider the following 299-residue polypeptide: ATP phosphoribosyltransferase (299 aa).

Belongs to the ATP phosphoribosyltransferase family. Long subfamily. It depends on Mg(2+) as a cofactor.

Its subcellular location is the cytoplasm. The catalysed reaction is 1-(5-phospho-beta-D-ribosyl)-ATP + diphosphate = 5-phospho-alpha-D-ribose 1-diphosphate + ATP. It participates in amino-acid biosynthesis; L-histidine biosynthesis; L-histidine from 5-phospho-alpha-D-ribose 1-diphosphate: step 1/9. With respect to regulation, feedback inhibited by histidine. In terms of biological role, catalyzes the condensation of ATP and 5-phosphoribose 1-diphosphate to form N'-(5'-phosphoribosyl)-ATP (PR-ATP). Has a crucial role in the pathway because the rate of histidine biosynthesis seems to be controlled primarily by regulation of HisG enzymatic activity. The protein is ATP phosphoribosyltransferase of Shewanella sp. (strain MR-7).